A 150-amino-acid polypeptide reads, in one-letter code: Guanine nucleotide-binding protein subunit gamma 2 (150 aa).

Acidic residues predominate over residues 1–11 (MRGEANGEEEQ). Residues 1 to 59 (MRGEANGEEEQQPPRRNHLRDDAEEEEEVERRAARPVSGQQQQQQRRRPTDVGGGAAMR) are disordered. A coiled-coil region spans residues 65–97 (GKHRLSAAIARLDQELQSLQDELNELETMEPAS). The region spanning 71–137 (AAIARLDQEL…RWFQRVRSSR (67 aa)) is the G protein gamma domain.

As to quaternary structure, g proteins are composed of 3 units, alpha, beta and gamma. Interacts with the beta subunit RGB1.

The protein resides in the cell membrane. Functionally, guanine nucleotide-binding proteins (G proteins) are involved as modulators or transducers in various transmembrane signaling systems. This Oryza sativa subsp. indica (Rice) protein is Guanine nucleotide-binding protein subunit gamma 2.